The sequence spans 216 residues: Ras-related protein Rab-5C (216 aa).

Residues Ser-30, Ala-31, Gly-33, Lys-34, Ser-35, Ser-36, His-47, Glu-48, Thr-53, and Gly-79 each coordinate GTP. A Mg(2+)-binding site is contributed by Ser-35. Short sequence motifs (switch) lie at residues 45–57 and 78–94; these read QFHE…IGAA and AGQE…YRGA. Thr-53 is a binding site for Mg(2+). The residue at position 85 (Ser-85) is a Phosphoserine. GTP is bound by residues Asn-134, Lys-135, Asp-137, Ala-165, and Lys-166. A disordered region spans residues 185 to 216; that stretch reads NEPQNAAGAPGRTRGVDLQESNPASRSQCCSN. Positions 203–216 are enriched in polar residues; the sequence is QESNPASRSQCCSN. 2 S-geranylgeranyl cysteine lipidation sites follow: Cys-213 and Cys-214.

Belongs to the small GTPase superfamily. Rab family. Interacts with EEA1 and INCA1. Interacts with GDI1, GDI2, CHML and CHM; phosphorylation at Ser-85 disrupts this interaction. Mg(2+) is required as a cofactor. In terms of processing, phosphorylation of Ser-85 in the switch II region by LRRK2 prevents the association of RAB regulatory proteins, including CHM, CHML and RAB GDP dissociation inhibitors GDI1 and GDI2.

The protein localises to the cell membrane. It is found in the early endosome membrane. It localises to the melanosome. It carries out the reaction GTP + H2O = GDP + phosphate + H(+). With respect to regulation, regulated by guanine nucleotide exchange factors (GEFs) which promote the exchange of bound GDP for free GTP. Regulated by GTPase activating proteins (GAPs) which increase the GTP hydrolysis activity. Inhibited by GDP dissociation inhibitors (GDIs). The small GTPases Rab are key regulators of intracellular membrane trafficking, from the formation of transport vesicles to their fusion with membranes. Rabs cycle between an inactive GDP-bound form and an active GTP-bound form that is able to recruit to membranes different sets of downstream effectors directly responsible for vesicle formation, movement, tethering and fusion. The protein is Ras-related protein Rab-5C of Mus musculus (Mouse).